The chain runs to 187 residues: MSNAEDHAGTRRDFLYYATAGAGAVATGAAVWPLINQMNPSADVQALASIFVDVSSVEPGVQLTVKFLGKPIFIRRRTEADIELGRSVQLGQLVDTNARNANIDAGAEATDQNRTLDEAGEWLVMWGVCTHLGCVPIGGVSGDFGGWFCPCHGSHYDSAGRIRKGPAPENLPIPLAKFIDETTIQLG.

The helical transmembrane segment at 15 to 35 threads the bilayer; it reads LYYATAGAGAVATGAAVWPLI. One can recognise a Rieske domain in the interval 89–185; the sequence is QLGQLVDTNA…AKFIDETTIQ (97 aa). [2Fe-2S] cluster-binding residues include C129, H131, C149, and H152. A disulfide bond links C134 and C151.

Belongs to the Rieske iron-sulfur protein family. The main subunits of complex b-c1 are: cytochrome b, cytochrome c1 and the Rieske protein. It depends on [2Fe-2S] cluster as a cofactor.

It localises to the cell membrane. It catalyses the reaction a quinol + 2 Fe(III)-[cytochrome c](out) = a quinone + 2 Fe(II)-[cytochrome c](out) + 2 H(+)(out). Component of the ubiquinol-cytochrome c reductase complex (complex III or cytochrome b-c1 complex), which is a respiratory chain that generates an electrochemical potential coupled to ATP synthesis. The sequence is that of Ubiquinol-cytochrome c reductase iron-sulfur subunit (petA) from Cereibacter sphaeroides (Rhodobacter sphaeroides).